The chain runs to 377 residues: Anhydro-N-acetylmuramic acid kinase (377 aa).

Residue 14–21 (GTSLDGVD) coordinates ATP.

The protein belongs to the anhydro-N-acetylmuramic acid kinase family.

The enzyme catalyses 1,6-anhydro-N-acetyl-beta-muramate + ATP + H2O = N-acetyl-D-muramate 6-phosphate + ADP + H(+). It functions in the pathway amino-sugar metabolism; 1,6-anhydro-N-acetylmuramate degradation. It participates in cell wall biogenesis; peptidoglycan recycling. Its function is as follows. Catalyzes the specific phosphorylation of 1,6-anhydro-N-acetylmuramic acid (anhMurNAc) with the simultaneous cleavage of the 1,6-anhydro ring, generating MurNAc-6-P. Is required for the utilization of anhMurNAc either imported from the medium or derived from its own cell wall murein, and thus plays a role in cell wall recycling. In Pasteurella multocida (strain Pm70), this protein is Anhydro-N-acetylmuramic acid kinase.